The sequence spans 331 residues: Centriolar satellite-associated tubulin polyglutamylase complex regulator 1 (331 aa).

The tract at residues 1-111 is required for interaction with PCM1; it reads MLSPERLALP…HCLLQLLCPD (111 aa). The segment at 1–225 is required for interaction with TPGS1, LRRC49, and TTLL1; that stretch reads MLSPERLALP…SCPPPALVKE (225 aa). The required for interaction with TPGS2 stretch occupies residues 112-331; the sequence is FPLELTQKAA…STEETDESET (220 aa). A disordered region spans residues 288–331; sequence SPEASCLPSRTPPRVGSPWRPLHHSRKVDGESDGSTEETDESET. A compositionally biased stretch (acidic residues) spans 318-331; that stretch reads ESDGSTEETDESET. Position 319 is a phosphoserine (Ser-319).

Belongs to the CSTPP1 family. In terms of assembly, interacts with PCM1. Interacts with TTLL1, TPGS1, TPGS2 and LRRC49; the interactions link CSTPP1 to the complex TPGC. Binds to alpha-tubulin.

Its subcellular location is the cytoplasm. It is found in the cytoskeleton. The protein localises to the microtubule organizing center. It localises to the centrosome. The protein resides in the centriolar satellite. Regulator of the tubulin polyglutamylase complex (TPGC) that controls cytoskeletal organization, nuclear shape, and cilium disassembly by balancing microtubule and actin assembly. Regulates the assembly and stability of the TPGC and thereby modulates polyglutamylation of the microtubule, which antagonizes MAP4 binding. In Pongo abelii (Sumatran orangutan), this protein is Centriolar satellite-associated tubulin polyglutamylase complex regulator 1 (CSTPP1).